The primary structure comprises 492 residues: Solute carrier family 2, facilitated glucose transporter member 1 (492 aa).

M1 bears the N-acetylmethionine mark. The Cytoplasmic portion of the chain corresponds to 1–11 (MEPSSKKLTGR). The helical transmembrane segment at 12–33 (LMLAVGGAVLGSLQFGYNTGVI) threads the bilayer. At 34–66 (NAPQKVIEEFYNQTWVHRYGESILPTTLTTLWS) the chain is on the extracellular side. N45 carries N-linked (GlcNAc...) asparagine glycosylation. A helical transmembrane segment spans residues 67–87 (LSVAIFSVGGMIGSFSVGLFV). At 88–90 (NRF) the chain is on the cytoplasmic side. The helical transmembrane segment at 91-112 (GRRNSMLMMNLLAFVSAVLMGF) threads the bilayer. The Extracellular portion of the chain corresponds to 113–120 (SKLGKSFE). A helical transmembrane segment spans residues 121-144 (MLILGRFIIGVYCGLTTGFVPMYV). Position 137 (T137) interacts with cytochalasin B. The Cytoplasmic segment spans residues 145 to 155 (GEVSPTALRGA). A helical membrane pass occupies residues 156-176 (LGTLHQLGIVVGILIAQVFGL). The Extracellular segment spans residues 177–185 (DSIMGNKDL). The helical transmembrane segment at 186–206 (WPLLLSIIFIPALLQCIVLPF) threads the bilayer. Topologically, residues 207 to 271 (CPESPRFLLI…LFRSPAYRQP (65 aa)) are cytoplasmic. Residue S226 is modified to Phosphoserine; by PKC/PRKCB. A helical transmembrane segment spans residues 272–293 (ILIAVVLQLSQQLSGINAVFYY). Q282 serves as a coordination point for cytochalasin B. D-glucose contacts are provided by residues 282–283 (QQ) and N288. The Extracellular portion of the chain corresponds to 294-306 (STSIFEKAGVQQP). The helical transmembrane segment at 307–328 (VYATIGSGIVNTAFTVVSLFVV) threads the bilayer. N317 provides a ligand contact to D-glucose. The Cytoplasmic segment spans residues 329–334 (ERAGRR). Residues 335-355 (TLHLIGLAGMAGCAILMTIAL) traverse the membrane as a helical segment. The Extracellular segment spans residues 356–365 (ALLEQLPWMS). The chain crosses the membrane as a helical span at residues 366–388 (YLSIVAIFGFVAFFEVGPGPIPW). Residue E380 participates in D-glucose binding. Residue W388 participates in cytochalasin B binding. The Cytoplasmic portion of the chain corresponds to 389–401 (FIVAELFSQGPRP). Residues 402 to 422 (AAIAVAGFSNWTSNFIVGMCF) form a helical membrane-spanning segment. Position 411 (N411) interacts with cytochalasin B. The Extracellular portion of the chain corresponds to 423–429 (QYVEQLC). A helical membrane pass occupies residues 430-450 (GPYVFIIFTVLLVLFFIFTYF). The Cytoplasmic portion of the chain corresponds to 451–492 (KVPETKGRTFDEIASGFRQGGASQSDKTPEELFHPLGADSQV). S465 carries the post-translational modification Phosphoserine. A disordered region spans residues 468 to 492 (RQGGASQSDKTPEELFHPLGADSQV). Residue T478 is modified to Phosphothreonine. A Phosphoserine modification is found at S490.

This sequence belongs to the major facilitator superfamily. Sugar transporter (TC 2.A.1.1) family. Glucose transporter subfamily. In terms of assembly, interacts with GIPC (via PDZ domain). Found in a complex with ADD2, DMTN and SLC2A1. Interacts (via C-terminus cytoplasmic region) with DMTN isoform 2. Interacts with SNX27; the interaction is required when endocytosed to prevent degradation in lysosomes and promote recycling to the plasma membrane. Interacts with STOM. Interacts with SGTA (via Gln-rich region). Interacts with isoform 1 of BSG. Post-translationally, phosphorylation at Ser-226 by PKC promotes glucose uptake by increasing cell membrane localization. As to expression, detected in erythrocytes (at protein level). Expressed at variable levels in many human tissues.

Its subcellular location is the cell membrane. It localises to the melanosome. The protein resides in the photoreceptor inner segment. The enzyme catalyses D-glucose(out) = D-glucose(in). The protein operates within carbohydrate degradation. With respect to regulation, the uptake of glucose is inhibited by cytochalasin B and Phe-amide core-scaffold inhibitors GLUT-i1 and GLUT-i2. These inhibitors bind in the central cavity of the inward-open state and overlap the glucose-binding site. Glucose uptake is increased in response to phorbol ester 12-O-tetradecanoylphorbol-13-acetate (TPA) treatment: TPA-induced glucose uptake requires phosphorylation at Ser-226. Interacts with SMIM43; the interaction may promote SLC2A1-mediated glucose transport to meet the energy needs of mesendoderm differentiation. Facilitative glucose transporter, which is responsible for constitutive or basal glucose uptake. Has a very broad substrate specificity; can transport a wide range of aldoses including both pentoses and hexoses. Most important energy carrier of the brain: present at the blood-brain barrier and assures the energy-independent, facilitative transport of glucose into the brain. In association with BSG and NXNL1, promotes retinal cone survival by increasing glucose uptake into photoreceptors. Required for mesendoderm differentiation. The sequence is that of Solute carrier family 2, facilitated glucose transporter member 1 from Homo sapiens (Human).